We begin with the raw amino-acid sequence, 152 residues long: Protein Turandot X (152 aa).

Positions 1–22 (MGFYISSLLICVFLGIVRFASA) are cleaved as a signal peptide.

Belongs to the Turandot family.

The protein resides in the secreted. A humoral factor that may play a role in stress tolerance. The polypeptide is Protein Turandot X (Drosophila erecta (Fruit fly)).